The sequence spans 342 residues: tRNA N6-adenosine threonylcarbamoyltransferase (342 aa).

2 residues coordinate Fe cation: histidine 112 and histidine 116. Substrate contacts are provided by residues 134–138 (LASGG), aspartate 167, glycine 180, and asparagine 280. Aspartate 308 serves as a coordination point for Fe cation.

This sequence belongs to the KAE1 / TsaD family. Fe(2+) is required as a cofactor.

The protein resides in the cytoplasm. The enzyme catalyses L-threonylcarbamoyladenylate + adenosine(37) in tRNA = N(6)-L-threonylcarbamoyladenosine(37) in tRNA + AMP + H(+). In terms of biological role, required for the formation of a threonylcarbamoyl group on adenosine at position 37 (t(6)A37) in tRNAs that read codons beginning with adenine. Is involved in the transfer of the threonylcarbamoyl moiety of threonylcarbamoyl-AMP (TC-AMP) to the N6 group of A37, together with TsaE and TsaB. TsaD likely plays a direct catalytic role in this reaction. This is tRNA N6-adenosine threonylcarbamoyltransferase from Rickettsia canadensis (strain McKiel).